Here is a 354-residue protein sequence, read N- to C-terminus: Putative Xaa-Pro aminopeptidase (354 aa).

Mn(2+) is bound by residues Asp213, Asp224, His290, Glu319, and Glu333.

Belongs to the peptidase M24B family. It depends on Mn(2+) as a cofactor.

It carries out the reaction Release of any N-terminal amino acid, including proline, that is linked to proline, even from a dipeptide or tripeptide.. This chain is Putative Xaa-Pro aminopeptidase (pepP), found in Mycoplasma pneumoniae (strain ATCC 29342 / M129 / Subtype 1) (Mycoplasmoides pneumoniae).